A 320-amino-acid chain; its full sequence is Serpentine receptor class delta-28 (320 aa).

7 consecutive transmembrane segments (helical) span residues 5 to 25 (LLHT…MYLA), 38 to 58 (AIIT…FFVM), 83 to 103 (ACYI…IWMI), 122 to 142 (SLVF…ATWI), 176 to 196 (LTLI…YAWI), 230 to 250 (FLPS…TQLI), and 258 to 278 (LVSV…ILFV).

Belongs to the nematode receptor-like protein srd family.

Its subcellular location is the membrane. In Caenorhabditis elegans, this protein is Serpentine receptor class delta-28 (srd-28).